A 599-amino-acid polypeptide reads, in one-letter code: Elongation factor 4 (599 aa).

One can recognise a tr-type G domain in the interval 4 to 186 (KFIRNFSIIA…AIIKHVPPPL (183 aa)). Residues 16–21 (DHGKST) and 133–136 (NKID) contribute to the GTP site.

It belongs to the TRAFAC class translation factor GTPase superfamily. Classic translation factor GTPase family. LepA subfamily.

It is found in the cell membrane. It catalyses the reaction GTP + H2O = GDP + phosphate + H(+). Required for accurate and efficient protein synthesis under certain stress conditions. May act as a fidelity factor of the translation reaction, by catalyzing a one-codon backward translocation of tRNAs on improperly translocated ribosomes. Back-translocation proceeds from a post-translocation (POST) complex to a pre-translocation (PRE) complex, thus giving elongation factor G a second chance to translocate the tRNAs correctly. Binds to ribosomes in a GTP-dependent manner. The polypeptide is Elongation factor 4 (Ureaplasma parvum serovar 3 (strain ATCC 27815 / 27 / NCTC 11736)).